A 369-amino-acid chain; its full sequence is Ribonuclease 3 (369 aa).

One can recognise an RNase III domain in the interval 6–142 (IGFVQSSINY…IIGAVAADCD (137 aa)). E46 contributes to the Mg(2+) binding site. Residue D50 is part of the active site. The Mg(2+) site is built by D128 and E131. E131 is an active-site residue. The region spanning 272-341 (NPASTLHELF…SLKLLKFIAK (70 aa)) is the DRBM domain.

This sequence belongs to the ribonuclease III family. In terms of assembly, homodimer. Mg(2+) is required as a cofactor.

Its subcellular location is the cytoplasm. The catalysed reaction is Endonucleolytic cleavage to 5'-phosphomonoester.. Its function is as follows. Digests double-stranded RNA. Involved in the processing of primary rRNA transcript to yield the immediate precursors to the large and small rRNAs (23S and 16S). Processes some mRNAs, and tRNAs when they are encoded in the rRNA operon. Processes pre-crRNA and tracrRNA of type II CRISPR loci if present in the organism. This is Ribonuclease 3 (rnc) from Treponema succinifaciens (strain ATCC 33096 / DSM 2489 / 6091).